The chain runs to 429 residues: Histidine--tRNA ligase (429 aa).

Belongs to the class-II aminoacyl-tRNA synthetase family. In terms of assembly, homodimer.

The protein localises to the cytoplasm. It catalyses the reaction tRNA(His) + L-histidine + ATP = L-histidyl-tRNA(His) + AMP + diphosphate + H(+). The sequence is that of Histidine--tRNA ligase from Streptococcus pneumoniae (strain 70585).